A 1207-amino-acid chain; its full sequence is DNA-directed RNA polymerase subunit beta' (1207 aa).

Residues cysteine 60, cysteine 62, cysteine 75, and cysteine 78 each coordinate Zn(2+). Residues aspartate 449, aspartate 451, and aspartate 453 each contribute to the Mg(2+) site. The Zn(2+) site is built by cysteine 822, cysteine 896, cysteine 903, and cysteine 906.

The protein belongs to the RNA polymerase beta' chain family. The RNAP catalytic core consists of 2 alpha, 1 beta, 1 beta' and 1 omega subunit. When a sigma factor is associated with the core the holoenzyme is formed, which can initiate transcription. Mg(2+) serves as cofactor. Zn(2+) is required as a cofactor.

It catalyses the reaction RNA(n) + a ribonucleoside 5'-triphosphate = RNA(n+1) + diphosphate. Functionally, DNA-dependent RNA polymerase catalyzes the transcription of DNA into RNA using the four ribonucleoside triphosphates as substrates. The sequence is that of DNA-directed RNA polymerase subunit beta' from Staphylococcus epidermidis (strain ATCC 35984 / DSM 28319 / BCRC 17069 / CCUG 31568 / BM 3577 / RP62A).